Reading from the N-terminus, the 161-residue chain is uncharacterized protein (161 aa).

This is an uncharacterized protein from Schizosaccharomyces pombe (strain 972 / ATCC 24843) (Fission yeast).